The primary structure comprises 536 residues: G-protein coupled receptor Mth2 (536 aa).

5 disulfides stabilise this stretch: Cys17/Cys71, Cys73/Cys78, Cys82/Cys177, Cys83/Cys96, and Cys138/Cys197. N-linked (GlcNAc...) asparagine glycans are attached at residues Asn24 and Asn33. Residues Asn103, Asn113, Asn118, Asn159, and Asn184 are each glycosylated (N-linked (GlcNAc...) asparagine). A helical transmembrane segment spans residues 212 to 232; the sequence is YAMMFSIPFMMLTIAVYLLIP. The Cytoplasmic portion of the chain corresponds to 233-241; sequence ELRNQHGKS. Residues 242–262 traverse the membrane as a helical segment; sequence LVCYLIGLTVGYSSLCYVQLY. The Extracellular portion of the chain corresponds to 263-273; that stretch reads QVDATGVTCKV. Residues 274-294 traverse the membrane as a helical segment; that stretch reads FGYTAYFFFMGAYMWLSVISF. Residues 295 to 314 are Cytoplasmic-facing; the sequence is DLWHNFRGTRGINRFQEKKR. Residues 315–335 form a helical membrane-spanning segment; that stretch reads FLFYSLYSWGIALVFLAFTYC. Over 336 to 365 the chain is Extracellular; the sequence is AQQLSNLPDNLKPGIGDGVYCWLDMSNWAA. Residues 366–386 traverse the membrane as a helical segment; the sequence is MIYFYGPILAIVVANTIMFIM. At 387-417 the chain is on the cytoplasmic side; that stretch reads TAIKIHGVQREMARIIASENSTKNLRTEKDK. Residues 418–438 traverse the membrane as a helical segment; it reads FGLFLRLFLIMGITWLTELIS. Topologically, residues 439 to 449 are extracellular; the sequence is YFVGSDKGWSK. The chain crosses the membrane as a helical span at residues 450–470; it reads LFYISDLANAMQGFLIFMLFV. Over 471–536 the chain is Cytoplasmic; sequence MKKKVKHLIT…VDPQKTTIFR (66 aa). A disordered region spans residues 487 to 506; it reads RDGSNQRQSQYSTKTTSSSV. Positions 492–505 are enriched in low complexity; the sequence is QRQSQYSTKTTSSS.

Belongs to the G-protein coupled receptor 2 family. Mth subfamily. Homodimer.

It localises to the cell membrane. In terms of biological role, involved in biological aging and stress response. Essential for adult survival. The chain is G-protein coupled receptor Mth2 (mth2) from Drosophila simulans (Fruit fly).